We begin with the raw amino-acid sequence, 110 residues long: UPF0145 protein (110 aa).

The protein belongs to the UPF0145 family.

The sequence is that of UPF0145 protein from Listeria ivanovii.